We begin with the raw amino-acid sequence, 85 residues long: U4-theraphotoxin-Hhn1c (85 aa).

A signal peptide spans 1–22 (MKVTLIAIVTCAAVLVLHTTAA). Positions 23-48 (EELEAESQLMEVGMPDTELAAVDEER) are excised as a propeptide. 3 cysteine pairs are disulfide-bonded: Cys-52–Cys-66, Cys-56–Cys-77, and Cys-71–Cys-82.

Belongs to the neurotoxin 12 (Hwtx-2) family. 02 (Hwtx-2) subfamily. In terms of tissue distribution, expressed by the venom gland.

It localises to the secreted. Functionally, postsynaptic neurotoxin. The polypeptide is U4-theraphotoxin-Hhn1c (Cyriopagopus hainanus (Chinese bird spider)).